Here is a 101-residue protein sequence, read N- to C-terminus: Iron-sulfur cluster assembly protein CyaY (101 aa).

It belongs to the frataxin family.

In terms of biological role, involved in iron-sulfur (Fe-S) cluster assembly. May act as a regulator of Fe-S biogenesis. The sequence is that of Iron-sulfur cluster assembly protein CyaY from Rickettsia akari (strain Hartford).